Reading from the N-terminus, the 342-residue chain is Lipase B (342 aa).

Residues Met1–Ala18 form the signal peptide. A propeptide spanning residues Ala19–Arg25 is cleaved from the precursor. Cysteines 47 and 89 form a disulfide. Asn99 is a glycosylation site (N-linked (GlcNAc...) asparagine). Active-site residues include Ser130, Asp212, and His249. 2 cysteine pairs are disulfide-bonded: Cys241–Cys283 and Cys318–Cys336.

It catalyses the reaction a triacylglycerol + H2O = a diacylglycerol + a fatty acid + H(+). Functionally, hydrolysis of triglycerides. Is very stereospecific both in hydrolysis and in organic synthesis and has a potentially important application in glucolipid synthesis. This is Lipase B from Pseudozyma antarctica (Yeast).